The primary structure comprises 183 residues: Hypoxanthine/guanine phosphoribosyltransferase (183 aa).

It belongs to the purine/pyrimidine phosphoribosyltransferase family. Archaeal HPRT subfamily. Homodimer.

The protein localises to the cytoplasm. It catalyses the reaction IMP + diphosphate = hypoxanthine + 5-phospho-alpha-D-ribose 1-diphosphate. The catalysed reaction is GMP + diphosphate = guanine + 5-phospho-alpha-D-ribose 1-diphosphate. Its pathway is purine metabolism; IMP biosynthesis via salvage pathway; IMP from hypoxanthine: step 1/1. In terms of biological role, catalyzes a salvage reaction resulting in the formation of IMP that is energically less costly than de novo synthesis. The chain is Hypoxanthine/guanine phosphoribosyltransferase from Methanocaldococcus jannaschii (strain ATCC 43067 / DSM 2661 / JAL-1 / JCM 10045 / NBRC 100440) (Methanococcus jannaschii).